Here is a 349-residue protein sequence, read N- to C-terminus: ATPase GET3 (349 aa).

An ATP-binding site is contributed by 26–33 (KGGVGKTT). The active site involves D57. ATP-binding residues include E242 and N269. Zn(2+) is bound by residues C281 and C284.

This sequence belongs to the arsA ATPase family. As to quaternary structure, homodimer. Component of the Golgi to ER traffic (GET) complex, which is composed of GET1, GET2 and GET3. Within the complex, GET1 and GET2 form a heterotetramer which is stabilized by phosphatidylinositol binding and which binds to the GET3 homodimer. Interacts with the chloride channel protein GEF1.

It localises to the cytoplasm. The protein localises to the endoplasmic reticulum. The protein resides in the golgi apparatus. ATPase required for the post-translational delivery of tail-anchored (TA) proteins to the endoplasmic reticulum. Recognizes and selectively binds the transmembrane domain of TA proteins in the cytosol. This complex then targets to the endoplasmic reticulum by membrane-bound receptors GET1 and GET2, where the tail-anchored protein is released for insertion. This process is regulated by ATP binding and hydrolysis. ATP binding drives the homodimer towards the closed dimer state, facilitating recognition of newly synthesized TA membrane proteins. ATP hydrolysis is required for insertion. Subsequently, the homodimer reverts towards the open dimer state, lowering its affinity for the GET1-GET2 receptor, and returning it to the cytosol to initiate a new round of targeting. Cooperates with the HDEL receptor ERD2 to mediate the ATP-dependent retrieval of resident ER proteins that contain a C-terminal H-D-E-L retention signal from the Golgi to the ER. Involved in low-level resistance to the oxyanions arsenite and arsenate, and in heat tolerance. In Lodderomyces elongisporus (strain ATCC 11503 / CBS 2605 / JCM 1781 / NBRC 1676 / NRRL YB-4239) (Yeast), this protein is ATPase GET3.